A 207-amino-acid chain; its full sequence is High frequency lysogenization protein HflD homolog (207 aa).

The protein belongs to the HflD family.

It is found in the cytoplasm. The protein localises to the cell inner membrane. The sequence is that of High frequency lysogenization protein HflD homolog from Cellvibrio japonicus (strain Ueda107) (Pseudomonas fluorescens subsp. cellulosa).